We begin with the raw amino-acid sequence, 143 residues long: MPRPRKTRTVRTDLAVHFYKPQGIPLRDLQSVTLSLDGLEALRLADVEGLEHAAGADSMGISRPTFSRLLTEARTTVATALVEGWAIHIDGGPVAQGPALDGSACPNRRQRRGPCARRGAAGALARQTGDEPPSSPTDNEKDD.

Residues 100-143 (LDGSACPNRRQRRGPCARRGAAGALARQTGDEPPSSPTDNEKDD) form a disordered region. A compositionally biased stretch (low complexity) spans 116–126 (ARRGAAGALAR).

The protein belongs to the UPF0251 family.

This Rhodospirillum rubrum (strain ATCC 11170 / ATH 1.1.1 / DSM 467 / LMG 4362 / NCIMB 8255 / S1) protein is UPF0251 protein Rru_A1194.